Reading from the N-terminus, the 327-residue chain is Zinc transport protein ZntB (327 aa).

At 1 to 273 the chain is on the cytoplasmic side; that stretch reads MEAIKGSDVN…ARRTYTMSLM (273 aa). The helical transmembrane segment at 274–294 threads the bilayer; it reads AMVFLPSTFLTGLFGVNLGGI. At 295–300 the chain is on the periplasmic side; sequence PGGGWQ. The helical transmembrane segment at 301-321 threads the bilayer; sequence FGFSIFCILLVVLIGGVALWL. Topologically, residues 322 to 327 are cytoplasmic; that stretch reads HRSKWL.

The protein belongs to the CorA metal ion transporter (MIT) (TC 1.A.35) family.

The protein localises to the cell inner membrane. It carries out the reaction Zn(2+)(out) + H(+)(out) = Zn(2+)(in) + H(+)(in). Functionally, zinc transporter. Acts as a Zn(2+):proton symporter, which likely mediates zinc ion uptake. The sequence is that of Zinc transport protein ZntB from Escherichia coli O8 (strain IAI1).